We begin with the raw amino-acid sequence, 274 residues long: MKIFIFYNPLKLSNDDLEENILKPFNESNIEVIGYAAAGSTVEEKQAQVADFFVIFGGDGTVLKIAEIAAIFSKPVIAVNTGNLGFLSSYSSSEIKELIEDIQKENISFSFRHLLECHVGTKKVVVLNDIVLLKSQPLGTMNVDVKIEEHTLFSFAGDGLIVSTPTGSTAYALSAGGPIIHPELNVVQLIPLAAHALNIRPFIAPPTQRIEIILKNMSKGFVYVTGDGDIIHRMEPGMSIFVTSSEMTIKLAQRNGNNYLNALDKKLGFGRRFE.

The active-site Proton acceptor is the Asp-59. NAD(+) contacts are provided by residues 59 to 60 (DG), Lys-64, 128 to 129 (ND), Asp-158, 169 to 174 (TAYALS), and Ala-193.

This sequence belongs to the NAD kinase family. Requires a divalent metal cation as cofactor.

The protein localises to the cytoplasm. It carries out the reaction NAD(+) + ATP = ADP + NADP(+) + H(+). Involved in the regulation of the intracellular balance of NAD and NADP, and is a key enzyme in the biosynthesis of NADP. Catalyzes specifically the phosphorylation on 2'-hydroxyl of the adenosine moiety of NAD to yield NADP. The protein is NAD kinase of Petrotoga mobilis (strain DSM 10674 / SJ95).